The chain runs to 146 residues: D-aminoacyl-tRNA deacylase (146 aa).

A Gly-cisPro motif, important for rejection of L-amino acids motif is present at residues 137–138 (GP).

This sequence belongs to the DTD family. In terms of assembly, homodimer.

It localises to the cytoplasm. It catalyses the reaction glycyl-tRNA(Ala) + H2O = tRNA(Ala) + glycine + H(+). The catalysed reaction is a D-aminoacyl-tRNA + H2O = a tRNA + a D-alpha-amino acid + H(+). An aminoacyl-tRNA editing enzyme that deacylates mischarged D-aminoacyl-tRNAs. Also deacylates mischarged glycyl-tRNA(Ala), protecting cells against glycine mischarging by AlaRS. Acts via tRNA-based rather than protein-based catalysis; rejects L-amino acids rather than detecting D-amino acids in the active site. By recycling D-aminoacyl-tRNA to D-amino acids and free tRNA molecules, this enzyme counteracts the toxicity associated with the formation of D-aminoacyl-tRNA entities in vivo and helps enforce protein L-homochirality. The chain is D-aminoacyl-tRNA deacylase from Bacillus cytotoxicus (strain DSM 22905 / CIP 110041 / 391-98 / NVH 391-98).